The following is a 397-amino-acid chain: DNA excision repair protein ERCC-8 (397 aa).

5 WD repeats span residues isoleucine 41–histidine 81, valine 97–valine 137, glycine 184–leucine 224, alanine 243–valine 282, and glycine 332–aspartate 371. A phosphoserine mark is found at serine 391, serine 392, and serine 393.

As to quaternary structure, part of the CSA complex (also named DCX(ERCC8) complex), a DCX E3 ubiquitin-protein ligase complex containing ERCC8, RBX1, DDB1 and CUL4A; the CSA complex interacts with RNA polymerase II; upon UV irradiation it interacts with the COP9 signalosome and preferentially with the hyperphosphorylated form of RNA polymerase II. Interacts with ERCC6/CSB (via CIM motif); promoting recruitment to lesion-stalled RNA polymerase II (Pol II). Interacts with KIAA1530/UVSSA. Interacts with a subunit of RNA polymerase II TFIIH.

It localises to the nucleus. The protein localises to the chromosome. The protein resides in the nucleus matrix. The protein operates within protein modification; protein ubiquitination. In terms of biological role, substrate-recognition component of the CSA complex, a DCX (DDB1-CUL4-X-box) E3 ubiquitin-protein ligase complex, involved in transcription-coupled nucleotide excision repair (TC-NER), a process during which RNA polymerase II-blocking lesions are rapidly removed from the transcribed strand of active genes. Following recruitment to lesion-stalled RNA polymerase II (Pol II), the CSA complex mediates ubiquitination of Pol II subunit POLR2A/RPB1 at 'Lys-1268', a critical TC-NER checkpoint, governing RNA Pol II stability and initiating DNA damage excision by TFIIH recruitment. The CSA complex also promotes the ubiquitination and subsequent proteasomal degradation of ERCC6/CSB in a UV-dependent manner; ERCC6 degradation is essential for the recovery of RNA synthesis after transcription-coupled repair. Also plays a role in DNA double-strand breaks (DSSBs) repair by non-homologous end joining (NHEJ). The sequence is that of DNA excision repair protein ERCC-8 from Mus musculus (Mouse).